We begin with the raw amino-acid sequence, 354 residues long: Methylthioribose-1-phosphate isomerase (354 aa).

Residues 58 to 60, R101, and Q204 contribute to the substrate site; that span reads RGA. D245 (proton donor) is an active-site residue. 255–256 contributes to the substrate binding site; the sequence is NK.

It belongs to the eIF-2B alpha/beta/delta subunits family. MtnA subfamily.

The enzyme catalyses 5-(methylsulfanyl)-alpha-D-ribose 1-phosphate = 5-(methylsulfanyl)-D-ribulose 1-phosphate. Its pathway is amino-acid biosynthesis; L-methionine biosynthesis via salvage pathway; L-methionine from S-methyl-5-thio-alpha-D-ribose 1-phosphate: step 1/6. Catalyzes the interconversion of methylthioribose-1-phosphate (MTR-1-P) into methylthioribulose-1-phosphate (MTRu-1-P). This Xanthomonas oryzae pv. oryzae (strain MAFF 311018) protein is Methylthioribose-1-phosphate isomerase.